Here is a 229-residue protein sequence, read N- to C-terminus: Ribonuclease 3 (229 aa).

Positions Leu8–Asp130 constitute an RNase III domain. Position 43 (Glu43) interacts with Mg(2+). Asp47 is a catalytic residue. Asp116 and Glu119 together coordinate Mg(2+). Glu119 is an active-site residue. The 71-residue stretch at Asp157–Glu227 folds into the DRBM domain. The tract at residues Ser201–Ala229 is disordered.

Belongs to the ribonuclease III family. Homodimer. The cofactor is Mg(2+).

It is found in the cytoplasm. The enzyme catalyses Endonucleolytic cleavage to 5'-phosphomonoester.. In terms of biological role, digests double-stranded RNA. Involved in the processing of primary rRNA transcript to yield the immediate precursors to the large and small rRNAs (23S and 16S). Processes some mRNAs, and tRNAs when they are encoded in the rRNA operon. Processes pre-crRNA and tracrRNA of type II CRISPR loci if present in the organism. The protein is Ribonuclease 3 of Idiomarina loihiensis (strain ATCC BAA-735 / DSM 15497 / L2-TR).